Here is a 307-residue protein sequence, read N- to C-terminus: 4-hydroxy-3-methylbut-2-enyl diphosphate reductase (307 aa).

Residue cysteine 13 coordinates [4Fe-4S] cluster. Residues histidine 42 and histidine 75 each coordinate (2E)-4-hydroxy-3-methylbut-2-enyl diphosphate. Dimethylallyl diphosphate-binding residues include histidine 42 and histidine 75. 2 residues coordinate isopentenyl diphosphate: histidine 42 and histidine 75. Cysteine 97 is a binding site for [4Fe-4S] cluster. Histidine 125 lines the (2E)-4-hydroxy-3-methylbut-2-enyl diphosphate pocket. Histidine 125 serves as a coordination point for dimethylallyl diphosphate. Residue histidine 125 coordinates isopentenyl diphosphate. The Proton donor role is filled by glutamate 127. Threonine 165 contacts (2E)-4-hydroxy-3-methylbut-2-enyl diphosphate. Cysteine 195 is a [4Fe-4S] cluster binding site. Serine 223, serine 224, asparagine 225, and serine 267 together coordinate (2E)-4-hydroxy-3-methylbut-2-enyl diphosphate. Residues serine 223, serine 224, asparagine 225, and serine 267 each coordinate dimethylallyl diphosphate. Serine 223, serine 224, asparagine 225, and serine 267 together coordinate isopentenyl diphosphate.

The protein belongs to the IspH family. [4Fe-4S] cluster is required as a cofactor.

The catalysed reaction is isopentenyl diphosphate + 2 oxidized [2Fe-2S]-[ferredoxin] + H2O = (2E)-4-hydroxy-3-methylbut-2-enyl diphosphate + 2 reduced [2Fe-2S]-[ferredoxin] + 2 H(+). It carries out the reaction dimethylallyl diphosphate + 2 oxidized [2Fe-2S]-[ferredoxin] + H2O = (2E)-4-hydroxy-3-methylbut-2-enyl diphosphate + 2 reduced [2Fe-2S]-[ferredoxin] + 2 H(+). It participates in isoprenoid biosynthesis; dimethylallyl diphosphate biosynthesis; dimethylallyl diphosphate from (2E)-4-hydroxy-3-methylbutenyl diphosphate: step 1/1. Its pathway is isoprenoid biosynthesis; isopentenyl diphosphate biosynthesis via DXP pathway; isopentenyl diphosphate from 1-deoxy-D-xylulose 5-phosphate: step 6/6. Catalyzes the conversion of 1-hydroxy-2-methyl-2-(E)-butenyl 4-diphosphate (HMBPP) into a mixture of isopentenyl diphosphate (IPP) and dimethylallyl diphosphate (DMAPP). Acts in the terminal step of the DOXP/MEP pathway for isoprenoid precursor biosynthesis. This is 4-hydroxy-3-methylbut-2-enyl diphosphate reductase from Chlamydia trachomatis serovar A (strain ATCC VR-571B / DSM 19440 / HAR-13).